The following is a 272-amino-acid chain: Troponin T, fast skeletal muscle (272 aa).

The segment covering 1–50 has biased composition (acidic residues); the sequence is MSDEETEQVEEQYEEEEEAQEEEVQEEAPEPEEVQEDAVAEEEREEDEEE. The tract at residues 1-75 is disordered; that stretch reads MSDEETEQVE…EKVDFDDIQK (75 aa). The residue at position 2 (S2) is an N-acetylserine. S2 is modified (phosphoserine). Basic and acidic residues predominate over residues 63–75; the sequence is PEGEKVDFDDIQK. Phosphoserine is present on S91. Positions 114-156 are enriched in basic and acidic residues; sequence RAERAEQQRIRAEKEREPQNRLAEEKARREEEDAKRRAEDDMK. The segment at 114–193 is disordered; the sequence is RAERAEQQRI…TAREMKKKIL (80 aa). Residues S162, S169, and S170 each carry the phosphoserine modification. Residues 184–193 are compositionally biased toward basic and acidic residues; the sequence is TAREMKKKIL. The residue at position 206 (S206) is a Phosphoserine. A Phosphotyrosine modification is found at Y222. The tract at residues 248 to 272 is disordered; sequence RIDQAQKHSKKAGATAKGKVGGRWK.

Belongs to the troponin T family. Expressed predominantly in skeletal muscle.

Troponin T is the tropomyosin-binding subunit of troponin, the thin filament regulatory complex which confers calcium-sensitivity to striated muscle actomyosin ATPase activity. In Mus musculus (Mouse), this protein is Troponin T, fast skeletal muscle (Tnnt3).